Here is a 113-residue protein sequence, read N- to C-terminus: MNAPDPRDQLARPLNNPFAEALDKPDRYVSFCGIDCDGNARILMQHIRRHIDDPTKGNAFWDKFRDKLEGRSSERCDELFLVHSYINMIRELFETYEDDDALALLQKIEEECC.

The protein belongs to the CowN family.

Is required to sustain N(2)-dependent growth in the presence of low levels of carbon monoxide (CO). Probably acts by protecting the N(2) fixation ability of the nitrogenase complex, which is inactivated in the presence of CO. The protein is N(2)-fixation sustaining protein CowN of Azoarcus sp. (strain BH72).